The sequence spans 495 residues: Zinc finger and SCAN domain-containing protein 5B (495 aa).

The segment at 1 to 40 (MAANWTLSWGQGGPCNSPGSDTPRSVASPETQLGNHDRNP) is disordered. Positions 17–34 (SPGSDTPRSVASPETQLG) are enriched in polar residues. Positions 44–126 (HMNFRMFSCP…DLLRNNRRPK (83 aa)) constitute an SCAN box domain. Disordered stretches follow at residues 150-183 (APAS…RREQ) and 227-347 (ENRE…PDGQ). The span at 161–173 (VSSQWASSVNQMH) shows a compositional bias: polar residues. Over residues 250 to 262 (RAKEGKEPQKRAS) the composition is skewed to basic and acidic residues. Positions 292–310 (NLSSPKRSKPDASSISQEE) are enriched in polar residues. C2H2-type zinc fingers lie at residues 355 to 377 (FACD…RRSH), 383 to 405 (FQCD…QRVH), 411 to 433 (YMCD…KRIH), 439 to 461 (FKCK…QRTH), and 467 to 489 (YKCP…LKTH).

It localises to the nucleus. Its function is as follows. May be involved in transcriptional regulation. This chain is Zinc finger and SCAN domain-containing protein 5B (ZSCAN5B), found in Homo sapiens (Human).